The sequence spans 713 residues: Probable glutamate carboxypeptidase VP8 (713 aa).

Residues 1–10 (MPHSVLARLP) are Cytoplasmic-facing. A helical; Signal-anchor for type II membrane protein transmembrane segment spans residues 11–31 (PGSVRLVAAFGLLLLVSLLVL). The Extracellular portion of the chain corresponds to 32–713 (HRRPGRPHVA…PTNFSSLVTP (682 aa)). Residues asparagine 66 and asparagine 311 are each glycosylated (N-linked (GlcNAc...) asparagine). The catalytic stretch occupies residues 245-539 (ATSGAERLKF…EIWGLLALRL (295 aa)). Zn(2+) contacts are provided by histidine 345 and aspartate 355. Catalysis depends on glutamate 392, which acts as the Nucleophile. 3 residues coordinate Zn(2+): glutamate 393, aspartate 421, and histidine 505. Residues asparagine 667 and asparagine 706 are each glycosylated (N-linked (GlcNAc...) asparagine).

This sequence belongs to the peptidase M28 family. M28B subfamily. Zn(2+) serves as cofactor.

It localises to the cell membrane. It carries out the reaction Release of an unsubstituted, C-terminal glutamyl residue, typically from Ac-Asp-Glu or folylpoly-gamma-glutamates.. Functionally, involved in the regulation of meristem development and seed maturation processes. Mediates regulation of embryonic regulatory genes and genes controlling abscisic acid (ABA) biosynthesis and turnover in developing seeds. May be required for the synthesis of small signaling molecules that integrates meristem and embryo formation in seeds. The chain is Probable glutamate carboxypeptidase VP8 from Zea mays (Maize).